The chain runs to 155 residues: Protein SprT-like (155 aa).

Positions 7–145 (QRHMEEVSLQ…GSCGGKLIQT (139 aa)) constitute a SprT-like domain. Residue His67 coordinates Zn(2+). Residue Glu68 is part of the active site. His71 contacts Zn(2+).

The protein belongs to the SprT family. It depends on Zn(2+) as a cofactor.

Its subcellular location is the cytoplasm. The chain is Protein SprT-like from Listeria monocytogenes serotype 4b (strain CLIP80459).